The following is a 530-amino-acid chain: Estrogen receptor beta (530 aa).

Residues Met1–Phe148 are modulating. The residue at position 61 (Ser61) is a Phosphoserine; alternate. An O-linked (GlcNAc) serine; alternate glycan is attached at Ser61. A phosphoserine; by MAPK mark is found at Ser87 and Ser105. 2 NR C4-type zinc fingers span residues Cys149–Cys169 and Cys185–Cys209. Positions Cys149 to Met214 form a DNA-binding region, nuclear receptor. An NR LBD domain is found at Ser264–His498. The span at Ser506–Thr515 shows a compositional bias: polar residues. The tract at residues Ser506 to Gln530 is disordered.

It belongs to the nuclear hormone receptor family. NR3 subfamily. Binds DNA as a homodimer. Can form a heterodimer with ESR1. Interacts with NCOA1, NCOA3, NCOA5 and NCOA6 coactivators, leading to a strong increase of transcription of target genes. Interacts with UBE1C and AKAP13. Interacts with DNTTIP2. Interacts with CCDC62 in the presence of estradiol/E2; this interaction seems to enhance the transcription of target genes. Interacts with DNAAF4. Interacts with PRMT2. Interacts with CCAR2 (via N-terminus) in a ligand-independent manner. Interacts with RBM39, in the presence of estradiol (E2). Interacts with STUB1/CHIP. Phosphorylation at Ser-87 and Ser-105 recruits NCOA1. In terms of tissue distribution, expressed in prostate, ovary, Leydig cells and in epithelium of the efferent ductules and of the initial segment of the epididymis.

It is found in the nucleus. Functionally, nuclear hormone receptor. Binds estrogens with an affinity similar to that of ESR1/ER-alpha, and activates expression of reporter genes containing estrogen response elements (ERE) in an estrogen-dependent manner. The protein is Estrogen receptor beta (Esr2) of Mus musculus (Mouse).